A 148-amino-acid polypeptide reads, in one-letter code: 3-dehydroquinate dehydratase (148 aa).

The active-site Proton acceptor is Y23. Residues N74, H80, and D87 each coordinate substrate. The active-site Proton donor is the H100. Substrate-binding positions include 101 to 102 (IS) and R111.

Belongs to the type-II 3-dehydroquinase family. In terms of assembly, homododecamer.

The catalysed reaction is 3-dehydroquinate = 3-dehydroshikimate + H2O. Its pathway is metabolic intermediate biosynthesis; chorismate biosynthesis; chorismate from D-erythrose 4-phosphate and phosphoenolpyruvate: step 3/7. Its function is as follows. Catalyzes a trans-dehydration via an enolate intermediate. The protein is 3-dehydroquinate dehydratase of Halothermothrix orenii (strain H 168 / OCM 544 / DSM 9562).